We begin with the raw amino-acid sequence, 206 residues long: Imidazole glycerol phosphate synthase subunit hisH (206 aa).

Positions 2–206 constitute a Glutamine amidotransferase type-1 domain; it reads KVGLVDYSMG…REVMKKAASL (205 aa). Catalysis depends on Cys80, which acts as the Nucleophile. Catalysis depends on residues His184 and Glu186.

Heterodimer of hisH and hisF.

It localises to the plastid. It is found in the chloroplast. The catalysed reaction is 5-[(5-phospho-1-deoxy-D-ribulos-1-ylimino)methylamino]-1-(5-phospho-beta-D-ribosyl)imidazole-4-carboxamide + L-glutamine = D-erythro-1-(imidazol-4-yl)glycerol 3-phosphate + 5-amino-1-(5-phospho-beta-D-ribosyl)imidazole-4-carboxamide + L-glutamate + H(+). The enzyme catalyses L-glutamine + H2O = L-glutamate + NH4(+). It participates in amino-acid biosynthesis; L-histidine biosynthesis; L-histidine from 5-phospho-alpha-D-ribose 1-diphosphate: step 5/9. Its function is as follows. IGPS catalyzes the conversion of PRFAR and glutamine to IGP, AICAR and glutamate. The HisH subunit catalyzes the hydrolysis of glutamine to glutamate and ammonia as part of the synthesis of IGP and AICAR. The resulting ammonia molecule is channeled to the active site of HisF. This chain is Imidazole glycerol phosphate synthase subunit hisH, found in Cyanidioschyzon merolae (strain NIES-3377 / 10D) (Unicellular red alga).